Reading from the N-terminus, the 290-residue chain is Protein CREG2 (290 aa).

Positions 1 to 31 are cleaved as a signal peptide; that stretch reads MSVRRGRRPARPGTRLSWLLCCSALLSPAAG. N-linked (GlcNAc...) asparagine glycosylation is found at Asn-165 and Asn-166.

It belongs to the CREG family. It is not sure whether N-glycosylation is on Asn-165 and/or Asn-166. Brain specific mainly in the limbic system and faintly in the spinal cord but not in cerebellum.

The protein resides in the secreted. The sequence is that of Protein CREG2 (CREG2) from Homo sapiens (Human).